The following is a 229-amino-acid chain: MGQKVHPNGIRLGITKPWISTWYADKSDYANNLNSDWEVRQYLTEKLKAASVSKIVIERPAKSIRVTIHTARPGVVIGKKGEDVEVLRAQVAKITGTTAQINIAEIRKPELDAKLVADSIAQQLERRVMFRRAMKRAVQNAMRIGAQGIKVEVSGRLGGAEIARSEWYREGRVPLHTLRADIDYSTSESHTQYGVIGVKVWIFKGEVLDGLVPQIEEPKQQPKRKPRAK.

The 69-residue stretch at 39 to 107 folds into the KH type-2 domain; sequence VRQYLTEKLK…TAQINIAEIR (69 aa).

It belongs to the universal ribosomal protein uS3 family. In terms of assembly, part of the 30S ribosomal subunit. Forms a tight complex with proteins S10 and S14.

Binds the lower part of the 30S subunit head. Binds mRNA in the 70S ribosome, positioning it for translation. In Shewanella denitrificans (strain OS217 / ATCC BAA-1090 / DSM 15013), this protein is Small ribosomal subunit protein uS3.